Consider the following 672-residue polypeptide: Transcriptional activator of sulfur metabolism MET4 (672 aa).

Basic and acidic residues predominate over residues 1-10 (MKQEQSHEGD). The segment at 1–44 (MKQEQSHEGDSYSTEFINLFGKDTATHPSSNNGANNNGMGSTNS) is disordered. Positions 29 to 44 (SSNNGANNNGMGSTNS) are enriched in low complexity. Short sequence motifs (9aaTAD) lie at residues 89–97 (ILLEQLAYV), 102–110 (PSLDNEFSN), and 109–117 (SNVDWNVNT). The transcriptional activation stretch occupies residues 95-144 (AYVDNFIPSLDNEFSNVDWNVNTTHNNANNNGADTFSSINANPFDLDEQL). 2 disordered regions span residues 157–265 (IFPD…NMTS) and 299–347 (TTHT…NITV). A compositionally biased stretch (low complexity) spans 165-174 (SNNNNNSNNG). Residues 175-188 (NDDHSNHDVLHEDP) show a composition bias toward basic and acidic residues. Positions 188–235 (PSTNNRQRNPHFLTQRRNTFLTSQYDQSKSRFSSKNKRNGNNGETNNF) are inhibitory region; AdoMet responsiveness; required for interaction with MET30. Over residues 202–214 (QRRNTFLTSQYDQ) the composition is skewed to polar residues. Over residues 226 to 238 (NGNNGETNNFGDN) the composition is skewed to low complexity. Polar residues-rich tracts occupy residues 251–265 (GSPSQFPADATNMTS) and 301–321 (HTPNRSSPLSNVTSAQNSSSQ). Positions 312 to 375 (VTSAQNSSSQ…NVPNGAYNSL (64 aa)) are auxiliary; required for high transcriptional activity under nonrepressive growth conditions. Residues 375 to 403 (LISAGFDNDQIDAIAAIMAYHHQKKIREN) form a required for interaction with MET31 and MET32 region. The residue at position 416 (serine 416) is a Phosphoserine. A disordered region spans residues 475–574 (PKSNNIHNQR…DNEDDEYDDA (100 aa)). The segment covering 477–486 (SNNIHNQRQP) has biased composition (polar residues). The segment covering 487–498 (SRNDHKISRESD) has biased composition (basic and acidic residues). Residues 499–512 (GNNGNDNVHHNNAV) show a composition bias toward low complexity. Basic and acidic residues-rich tracts occupy residues 519-528 (RGDEIAKIRS) and 537-565 (SDHKENSLKRSHSGDLKNKKVPVDRKYSD). Serine 564 is subject to Phosphoserine. The region spanning 586–649 (KKELGDDDED…KLLKNLVLSS (64 aa)) is the bZIP domain. The segment at 601–612 (KKSHQKKKLKEK) is basic motif. Residues 609–648 (LKEKELESSIHELTEIAASLQKRIHTLETENKLLKNLVLS) adopt a coiled-coil conformation. Residues 614–642 (LESSIHELTEIAASLQKRIHTLETENKLL) are leucine-zipper.

It belongs to the bZIP family. In terms of assembly, interacts with MET30. Tethered to DNA through two alternate complexes associating MET4 with MET28 and either MET31 or MET32. Interacts with MET28 and CBF1 through its leucine zipper to form a heteromeric complex.

The protein localises to the nucleus. In terms of biological role, positive trans-acting factor capable of stimulating the transcription of the MET genes from the methionine biosynthetic pathway. MET4, MET28 and CBF1 are required for full induction of MET25 and MET16 gene transcription. MET4 controls as well the derepression of MET6. Required for the transcription of genes necessary for sulfur amino acid biosynthesis. Involved in the transcription activation of MET28 and MET30. Required for MET3 gene expression via assembly of the MET4-MET28-MET31 and MET4-MET28-MET32 complexes. Involved in response to cadmium and arsenic. Cadmium-activated MET4 also induces glutathione biosynthesis. This Saccharomyces cerevisiae (strain ATCC 204508 / S288c) (Baker's yeast) protein is Transcriptional activator of sulfur metabolism MET4 (MET4).